The chain runs to 198 residues: Peptidyl-tRNA hydrolase (198 aa).

Y15 provides a ligand contact to tRNA. The active-site Proton acceptor is H20. Residues F66, N68, and N114 each contribute to the tRNA site.

Belongs to the PTH family. In terms of assembly, monomer.

The protein resides in the cytoplasm. It catalyses the reaction an N-acyl-L-alpha-aminoacyl-tRNA + H2O = an N-acyl-L-amino acid + a tRNA + H(+). Hydrolyzes ribosome-free peptidyl-tRNAs (with 1 or more amino acids incorporated), which drop off the ribosome during protein synthesis, or as a result of ribosome stalling. Its function is as follows. Catalyzes the release of premature peptidyl moieties from peptidyl-tRNA molecules trapped in stalled 50S ribosomal subunits, and thus maintains levels of free tRNAs and 50S ribosomes. The polypeptide is Peptidyl-tRNA hydrolase (Cupriavidus necator (strain ATCC 17699 / DSM 428 / KCTC 22496 / NCIMB 10442 / H16 / Stanier 337) (Ralstonia eutropha)).